A 79-amino-acid chain; its full sequence is Conotoxin Kt6.1 (79 aa).

The signal sequence occupies residues 1–22 (MKLTCVLIISVLFLTASQLITA). The propeptide occupies 23 to 47 (VYSRDKQQYRAARLRDEMRNLKGAR). Intrachain disulfides connect Cys49–Cys62, Cys56–Cys67, and Cys61–Cys77. 4-hydroxyproline is present on residues Pro60 and Pro63.

Belongs to the conotoxin O1 superfamily. In terms of tissue distribution, expressed by the venom duct.

Its subcellular location is the secreted. In terms of biological role, ion channel inhibitor that inhibits the increase in intracellular calcium upon depolarization in DRG neurons. In vivo, both intraperitoneal and intracranial injections into mice induce hyperactivity. The chain is Conotoxin Kt6.1 from Conus kintoki (Cone snail).